Reading from the N-terminus, the 485-residue chain is Arginine biosynthesis bifunctional protein ArgJ, mitochondrial (485 aa).

4 residues coordinate substrate: threonine 185, lysine 214, threonine 225, and glutamate 315. Catalysis depends on threonine 225, which acts as the Nucleophile.

This sequence belongs to the ArgJ family. In terms of assembly, heterodimer of an alpha and a beta chain. Post-translationally, the alpha and beta chains are autoproteolytically processed from a single precursor protein within the mitochondrion.

The protein localises to the mitochondrion matrix. The enzyme catalyses N(2)-acetyl-L-ornithine + L-glutamate = N-acetyl-L-glutamate + L-ornithine. It carries out the reaction L-glutamate + acetyl-CoA = N-acetyl-L-glutamate + CoA + H(+). The protein operates within amino-acid biosynthesis; L-arginine biosynthesis; L-ornithine and N-acetyl-L-glutamate from L-glutamate and N(2)-acetyl-L-ornithine (cyclic): step 1/1. Its pathway is amino-acid biosynthesis; L-arginine biosynthesis; N(2)-acetyl-L-ornithine from L-glutamate: step 1/4. Its function is as follows. Catalyzes two activities which are involved in the cyclic version of arginine biosynthesis: the synthesis of acetylglutamate from glutamate and acetyl-CoA, and of ornithine by transacetylation between acetylornithine and glutamate. This Penicillium rubens (strain ATCC 28089 / DSM 1075 / NRRL 1951 / Wisconsin 54-1255) (Penicillium chrysogenum) protein is Arginine biosynthesis bifunctional protein ArgJ, mitochondrial.